Reading from the N-terminus, the 229-residue chain is Large ribosomal subunit protein uL1 (229 aa).

Belongs to the universal ribosomal protein uL1 family. Part of the 50S ribosomal subunit.

Its function is as follows. Binds directly to 23S rRNA. The L1 stalk is quite mobile in the ribosome, and is involved in E site tRNA release. In terms of biological role, protein L1 is also a translational repressor protein, it controls the translation of the L11 operon by binding to its mRNA. This chain is Large ribosomal subunit protein uL1, found in Lactococcus lactis subsp. lactis (strain IL1403) (Streptococcus lactis).